Here is a 97-residue protein sequence, read N- to C-terminus: Co-chaperonin GroES (97 aa).

Belongs to the GroES chaperonin family. In terms of assembly, heptamer of 7 subunits arranged in a ring. Interacts with the chaperonin GroEL.

The protein resides in the cytoplasm. In terms of biological role, together with the chaperonin GroEL, plays an essential role in assisting protein folding. The GroEL-GroES system forms a nano-cage that allows encapsulation of the non-native substrate proteins and provides a physical environment optimized to promote and accelerate protein folding. GroES binds to the apical surface of the GroEL ring, thereby capping the opening of the GroEL channel. The protein is Co-chaperonin GroES of Erwinia tasmaniensis (strain DSM 17950 / CFBP 7177 / CIP 109463 / NCPPB 4357 / Et1/99).